Reading from the N-terminus, the 90-residue chain is Serine protease inhibitor kazal-like protein, minor form (90 aa).

The first 23 residues, 1–23, serve as a signal peptide directing secretion; the sequence is MSSTWIKFLFILTLVLLPYSVFS. The region spanning 33–89 is the Kazal-like domain; it reads VIKEPNCTMYKSKSECSNIAENPVCADDRNTYYNECYFCIEKVVEKLKYRYHGICIY. A glycan (N-linked (GlcNAc...) asparagine) is linked at asparagine 38.

As to expression, luminal fluid and mucosal folds of the seminal vesicles (at protein level). Not detected in brain, heart, lung, liver, kidney, stomach, small intestine, muscle, skin, thymus, placenta or bladder.

It localises to the secreted. Does not function as an inhibitor of trypsin, chymotrypsin, subtilisin or elastase. Binds sperm and enhances sperm motility. May act as a decapacitation factor, suppresses BSA-stimulated sperm capacitation and blocks sperm-oocyte interactions in vitro. In Mus musculus (Mouse), this protein is Serine protease inhibitor kazal-like protein, minor form (Spinkl).